We begin with the raw amino-acid sequence, 443 residues long: Serine/threonine-protein phosphatase 2A 55 kDa regulatory subunit B beta isoform (443 aa).

WD repeat units lie at residues Thr-22 to Val-61, Glu-87 to Glu-128, Ala-171 to Asn-209, and Glu-220 to Arg-260. Ser-275 carries the phosphoserine modification. WD repeat units follow at residues Glu-279–Glu-317, Glu-334–Leu-375, and Asp-410–Val-442. Tyr-295 carries the phosphotyrosine modification. Thr-298 is modified (phosphothreonine).

The protein belongs to the phosphatase 2A regulatory subunit B family. As to quaternary structure, PP2A consists of a common heterodimeric core enzyme, composed of a 36 kDa catalytic subunit (subunit C) and a 65 kDa constant regulatory subunit (PR65 or subunit A), that associates with a variety of regulatory subunits. Proteins that associate with the core dimer include three families of regulatory subunits B (the R2/B/PR55/B55, R3/B''/PR72/PR130/PR59 and R5/B'/B56 families), the 48 kDa variable regulatory subunit, viral proteins, and cell signaling molecules. Interacts with TOMM22. Interacts with IER5 (via N- and C-terminal regions).

It is found in the cytoplasm. The protein localises to the cytoskeleton. Its subcellular location is the membrane. In terms of biological role, the B regulatory subunit might modulate substrate selectivity and catalytic activity, and might also direct the localization of the catalytic enzyme to a particular subcellular compartment. This chain is Serine/threonine-protein phosphatase 2A 55 kDa regulatory subunit B beta isoform (PPP2R2B), found in Bos taurus (Bovine).